Consider the following 233-residue polypeptide: MSKLTKRQKMIAERVESQKLYTLEEAVSILNDLPPLKFKESVDIAINLGVDPRKSDQVVRGATNLPAGTGKTKRVAVFAQGAAADAAKEAGADVVGMDDLAEQVKAGNLDFDVVIAAPDAMRVVGQLGTILGPRGLMPNPKVGTVTPNVAEAVANAKAGQATYRVDKAGIIHTTIGQVGFTVEQIQQNVQALLADIRRAKPATSKGIYIKKITLSSTMGPGIALDPLPYRVAK.

This sequence belongs to the universal ribosomal protein uL1 family. As to quaternary structure, part of the 50S ribosomal subunit.

Its function is as follows. Binds directly to 23S rRNA. The L1 stalk is quite mobile in the ribosome, and is involved in E site tRNA release. Protein L1 is also a translational repressor protein, it controls the translation of the L11 operon by binding to its mRNA. The protein is Large ribosomal subunit protein uL1 of Psychrobacter sp. (strain PRwf-1).